Reading from the N-terminus, the 471-residue chain is Uronate isomerase (471 aa).

The protein belongs to the metallo-dependent hydrolases superfamily. Uronate isomerase family.

The catalysed reaction is D-glucuronate = D-fructuronate. It catalyses the reaction aldehydo-D-galacturonate = keto-D-tagaturonate. Its pathway is carbohydrate metabolism; pentose and glucuronate interconversion. The protein is Uronate isomerase of Xanthomonas campestris pv. campestris (strain B100).